The sequence spans 215 residues: RxLR effector protein PITG_00582 (215 aa).

Residues methionine 1–cysteine 19 form the signal peptide. Residues arginine 39–arginine 51 carry the RxLR-dEER motif. The stretch at valine 81–glutamine 149 forms a coiled coil.

Belongs to the RxLR effector family.

The protein localises to the secreted. The protein resides in the host cell membrane. Its function is as follows. Effector that might be involved in host plant infection. This is RxLR effector protein PITG_00582 from Phytophthora infestans (strain T30-4) (Potato late blight agent).